Reading from the N-terminus, the 507-residue chain is Fatty acid resistance protein FarB (507 aa).

14 helical membrane-spanning segments follow: residues 8 to 28, 52 to 72, 78 to 98, 109 to 129, 136 to 156, 164 to 184, 199 to 219, 233 to 253, 274 to 294, 303 to 323, 334 to 354, 363 to 383, 399 to 419, and 478 to 498; these read GAALAWVTLSLGLAVFMEVLD, WVITSFSVANAVSVPLTGFLA, VKLFTAAAAGFVIASWLCGIA, ILQGFIAGPLIPLSQSLLMAS, MLALALWAMTVVVAPVLGPIL, WHWGWIFFINIPIGIISAWIT, PTDYVGLTLMMVGIGALQMML, IITLGITALVCLSYFIVWELG, IATSLGFMVYMGTLTLLPLVL, AWAGLAAAPVGILPVFLSPLI, LLVTASFLTFAFTFYWRTDFY, IWPQFWQGVGVAMFFLPLTTI, LSNFLRVLMGGVGVSVVSTLW, and IFLAGSILFIVLIPIVWLAKP.

The protein belongs to the major facilitator superfamily. EmrB family. Probably part of a tripartite efflux system FarAB-MtrE, which is composed of an inner membrane transporter, FarB, a periplasmic membrane fusion protein, FarA, and an outer membrane component, MtrE.

The protein localises to the cell inner membrane. Functionally, mediates resistance to long-chained antibacterial fatty acids (FAs). Function is dependent on the MtrE outer membrane protein. The protein is Fatty acid resistance protein FarB of Neisseria gonorrhoeae.